Consider the following 475-residue polypeptide: Equilibrative nucleoside transporter 3 (475 aa).

At 1–51 (MAFASEDIAYHSSNAVYRVPSNRHEADQEALLGKPLDYPAPGLQRPEDRFN) the chain is on the cytoplasmic side. Position 21 is a phosphoserine (S21). The Dileucine internalization motif motif lies at 31–32 (LL). A helical transmembrane segment spans residues 52 to 72 (GAYIIFFCLGIGGLLPWNFFV). The Extracellular portion of the chain corresponds to 73-105 (TAKEYWAFKLRNCSSPASGKDPEDADILNYFES). N84 carries N-linked (GlcNAc...) asparagine glycosylation. A helical transmembrane segment spans residues 106–126 (YLAVASTVPSLLFLVANFLLV). Over 127-132 (NRIRVH) the chain is Cytoplasmic. A helical membrane pass occupies residues 133 to 153 (VRVLASLSVSLAIFVVMAVLV). Topologically, residues 154–162 (RVDTSSWTR) are extracellular. A helical membrane pass occupies residues 163 to 183 (GFFSIAMACMAIISSSSTIFN). Over 184 to 199 (SSVYGLTGSFPMRNAQ) the chain is Cytoplasmic. Residues 200-220 (ALISGGAMGGTVSAVASLVDL) form a helical membrane-spanning segment. Topologically, residues 221–230 (AASSDVRDSA) are extracellular. The helical transmembrane segment at 231–251 (LAFFLTAAVFLGLCVGLYLLL) threads the bilayer. Residues 252–305 (PQLEYARYYMRPVVPIHVFSSEDSPPRDAPSTSSVAPASRAVHTPPLGPILKKT) lie on the Cytoplasmic side of the membrane. Residues 272–291 (SEDSPPRDAPSTSSVAPASR) are disordered. Residues 306–326 (AGLGFCAVFLYFITALIFPAI) traverse the membrane as a helical segment. Residues 327 to 340 (STNIQPMHKGTGSP) lie on the Extracellular side of the membrane. The helical transmembrane segment at 341 to 361 (WTSKFYVPLTVFLLFNFADLC) threads the bilayer. The Cytoplasmic segment spans residues 362–377 (GRQVTAWIQVPGPRSK). A helical transmembrane segment spans residues 378–398 (LLPILAVSRVCLVPLFLLCNY). At 399–414 (QPRSHLTLVLFQSDIY) the chain is on the extracellular side. The chain crosses the membrane as a helical span at residues 415 to 437 (PILFTCLLGLSNGYLSTLVLMYG). Residues 438 to 450 (PKIVPRELAEATS) lie on the Cytoplasmic side of the membrane. Residues 451–471 (VVMLFYMSLGLMLGSACAALL) traverse the membrane as a helical segment. Residues 472 to 475 (EHFI) lie on the Extracellular side of the membrane.

It belongs to the SLC29A/ENT transporter (TC 2.A.57) family. Widely expressed. Highest levels in heart and liver (at protein level).

It is found in the lysosome membrane. It localises to the late endosome membrane. Its subcellular location is the mitochondrion membrane. The protein localises to the cell membrane. It carries out the reaction adenosine(in) = adenosine(out). It catalyses the reaction guanosine(in) = guanosine(out). The enzyme catalyses inosine(in) = inosine(out). The catalysed reaction is uridine(out) = uridine(in). It carries out the reaction cytidine(in) = cytidine(out). It catalyses the reaction thymidine(in) = thymidine(out). The enzyme catalyses 2'-deoxyadenosine(in) = 2'-deoxyadenosine(out). The catalysed reaction is 2'-deoxycytidine(in) = 2'-deoxycytidine(out). It carries out the reaction guanine(out) = guanine(in). It catalyses the reaction uracil(in) = uracil(out). The enzyme catalyses (R)-noradrenaline(out) = (R)-noradrenaline(in). The catalysed reaction is dopamine(out) = dopamine(in). It carries out the reaction serotonin(out) = serotonin(in). It catalyses the reaction tyramine(in) = tyramine(out). The enzyme catalyses ATP(in) = ATP(out). Functionally, uniporter that mediates the facilitative transport of nucleoside across lysosomal and mitochondrial membranes. Functions as a non-electrogenic Na(+)-independent transporter. Substrate transport is pH-dependent and enhanced under acidic condition, probably reflecting the location of the transporter in acidic intracellular compartments. Proton is not a cotransporting ion but most likely change the ionization state of the transporter which dictates transport-permissible/impermissible conformation for nucleoside translocation. May direct the nucleoside transport from lysosomes to cytosol or cytosol to mitochondria to facilitate the fundamental function of salvage synthesis of nucleic acids. Involved in the transport of nucleosides (adenosine, guanosine, uridine, thymidine, cytidine and inosine) and deoxynucleosides (deoxyadenosine, deoxycytidine). Also mediates transport of purine nucleobases (adenine, guanine) and pyrimidine nucleobases (uracil). Also able to transport monoamine neurotransmitters dopamine, serotonin, noradrenaline and tyramine. Capable of transporting ATP. Mediates nucleoside export from lysosomes in macrophages, which regulates macrophage functions and numbers. In Rattus norvegicus (Rat), this protein is Equilibrative nucleoside transporter 3.